A 530-amino-acid chain; its full sequence is uncharacterized protein (530 aa).

A disordered region spans residues 362–408; the sequence is NLTPKLNKTNEDIKSDSTSQPQGFPEGNRRVMENPETKVSKTDDEEM. The span at 388–403 shows a compositional bias: basic and acidic residues; that stretch reads GNRRVMENPETKVSKT.

The protein belongs to the IIV-6 030L family.

This is an uncharacterized protein from Invertebrate iridescent virus 6 (IIV-6).